The chain runs to 288 residues: Pantothenate synthetase (288 aa).

30–37 (MGNLHNGH) provides a ligand contact to ATP. The Proton donor role is filled by histidine 37. Glutamine 61 lines the (R)-pantoate pocket. Beta-alanine is bound at residue glutamine 61. 149-152 (GQKD) contributes to the ATP binding site. Glutamine 155 serves as a coordination point for (R)-pantoate. ATP-binding positions include valine 178 and 186–189 (LSSR).

It belongs to the pantothenate synthetase family. As to quaternary structure, homodimer.

The protein localises to the cytoplasm. The catalysed reaction is (R)-pantoate + beta-alanine + ATP = (R)-pantothenate + AMP + diphosphate + H(+). It functions in the pathway cofactor biosynthesis; (R)-pantothenate biosynthesis; (R)-pantothenate from (R)-pantoate and beta-alanine: step 1/1. Functionally, catalyzes the condensation of pantoate with beta-alanine in an ATP-dependent reaction via a pantoyl-adenylate intermediate. The polypeptide is Pantothenate synthetase (Tolumonas auensis (strain DSM 9187 / NBRC 110442 / TA 4)).